The following is a 263-amino-acid chain: MSQSGSVLRRNGFTFKQFFVAHDRCAMKVGTDGILLGAWAPVADVKRILDIGTGSGLLALMLAQRTDDNVPIDAVELDAGAAMQAQENVAHSPWPHRITVHTDDIQRWAPRQTVRFDLIISNPPYYEPGVECATPQREQARYTATLDHQTLLAIAADCITEDGFFCVVLPEQIGNAFTQQALNMGWHLRLRTDVAENEARLPHRVLLAFSPQAGECFSDRLVIRGSDQHYSESYTALTQAFYLFMWGVNGERIDGPDSASCCG.

The protein belongs to the methyltransferase superfamily. tRNA (adenine-N(6)-)-methyltransferase family.

Its subcellular location is the cytoplasm. It carries out the reaction adenosine(37) in tRNA1(Val) + S-adenosyl-L-methionine = N(6)-methyladenosine(37) in tRNA1(Val) + S-adenosyl-L-homocysteine + H(+). Functionally, specifically methylates the adenine in position 37 of tRNA(1)(Val) (anticodon cmo5UAC). This is tRNA1(Val) (adenine(37)-N6)-methyltransferase from Salmonella choleraesuis (strain SC-B67).